We begin with the raw amino-acid sequence, 407 residues long: 1-deoxy-D-xylulose 5-phosphate reductoisomerase (407 aa).

The NADPH site is built by threonine 25, glycine 26, serine 27, isoleucine 28, asparagine 53, and asparagine 136. Lysine 137 serves as a coordination point for 1-deoxy-D-xylulose 5-phosphate. An NADPH-binding site is contributed by glutamate 138. Residue aspartate 162 participates in Mn(2+) binding. 4 residues coordinate 1-deoxy-D-xylulose 5-phosphate: serine 163, glutamate 164, serine 188, and histidine 211. Glutamate 164 contributes to the Mn(2+) binding site. Glycine 217 lines the NADPH pocket. Residues serine 224, asparagine 229, lysine 230, and glutamate 233 each contribute to the 1-deoxy-D-xylulose 5-phosphate site. Glutamate 233 serves as a coordination point for Mn(2+).

This sequence belongs to the DXR family. The cofactor is Mg(2+). Requires Mn(2+) as cofactor.

The catalysed reaction is 2-C-methyl-D-erythritol 4-phosphate + NADP(+) = 1-deoxy-D-xylulose 5-phosphate + NADPH + H(+). The protein operates within isoprenoid biosynthesis; isopentenyl diphosphate biosynthesis via DXP pathway; isopentenyl diphosphate from 1-deoxy-D-xylulose 5-phosphate: step 1/6. Its function is as follows. Catalyzes the NADPH-dependent rearrangement and reduction of 1-deoxy-D-xylulose-5-phosphate (DXP) to 2-C-methyl-D-erythritol 4-phosphate (MEP). This is 1-deoxy-D-xylulose 5-phosphate reductoisomerase from Rhodopseudomonas palustris (strain BisB18).